Reading from the N-terminus, the 522-residue chain is Amine oxidase [flavin-containing] (522 aa).

Topologically, residues 1–492 (MTAQNTFDVI…FWERNLPSVG (492 aa)) are cytoplasmic. Cys399 is subject to S-8alpha-FAD cysteine. Residues 493-513 (GFINFLAASVLSVATAAGMLA) traverse the membrane as a helical; Anchor for type IV membrane protein segment. Topologically, residues 514 to 522 (YQKGLLTRS) are mitochondrial intermembrane.

This sequence belongs to the flavin monoamine oxidase family. It depends on FAD as a cofactor.

It is found in the mitochondrion outer membrane. The catalysed reaction is a secondary aliphatic amine + O2 + H2O = a primary amine + an aldehyde + H2O2. Its function is as follows. Catalyzes the oxidative deamination of biogenic and xenobiotic amines and has important functions in the metabolism of neuroactive and vasoactive amines in the central nervous system and peripheral tissues. Oxidizes both 5-hydroxytryptamine (5-HT) and beta-phenylethylamine (PEA). This is Amine oxidase [flavin-containing] (mao) from Oncorhynchus mykiss (Rainbow trout).